A 152-amino-acid chain; its full sequence is CASP-like protein 5C1 (152 aa).

The Cytoplasmic segment spans residues 1 to 12 (MVRTTASFGTSS). The helical transmembrane segment at 13–33 (SFVLRLGQTLFSSASLLFMCF) threads the bilayer. The Extracellular segment spans residues 34–44 (NDDEDFYAYTT). Residues 45–65 (FCYLVTVMGLVTPWSVTLALM) form a helical membrane-spanning segment. Over 66-80 (EAYSILVKKLPMQAT) the chain is Cytoplasmic. Residues 81–101 (VISVIVAGDFVLSFLSLGGAC) form a helical membrane-spanning segment. Residues 102 to 126 (STASVAVLLMDAGEKQCDRYKLSAT) are Extracellular-facing. Residues 127–147 (MAFLSSFLSFASTFFNFCLLP) traverse the membrane as a helical segment. At 148–152 (SLMSH) the chain is on the cytoplasmic side.

It belongs to the Casparian strip membrane proteins (CASP) family. Homodimer and heterodimers.

It is found in the cell membrane. This chain is CASP-like protein 5C1, found in Arabidopsis thaliana (Mouse-ear cress).